Consider the following 466-residue polypeptide: ATP synthase subunit beta (466 aa).

155–162 serves as a coordination point for ATP; it reads GGAGVGKT.

It belongs to the ATPase alpha/beta chains family. As to quaternary structure, F-type ATPases have 2 components, CF(1) - the catalytic core - and CF(0) - the membrane proton channel. CF(1) has five subunits: alpha(3), beta(3), gamma(1), delta(1), epsilon(1). CF(0) has three main subunits: a(1), b(2) and c(9-12). The alpha and beta chains form an alternating ring which encloses part of the gamma chain. CF(1) is attached to CF(0) by a central stalk formed by the gamma and epsilon chains, while a peripheral stalk is formed by the delta and b chains.

It localises to the cell inner membrane. The enzyme catalyses ATP + H2O + 4 H(+)(in) = ADP + phosphate + 5 H(+)(out). In terms of biological role, produces ATP from ADP in the presence of a proton gradient across the membrane. The catalytic sites are hosted primarily by the beta subunits. The sequence is that of ATP synthase subunit beta from Bordetella avium (strain 197N).